The chain runs to 236 residues: Small ribosomal subunit protein uS2c (236 aa).

It belongs to the universal ribosomal protein uS2 family.

Its subcellular location is the plastid. The protein localises to the chloroplast. This Gossypium barbadense (Sea Island cotton) protein is Small ribosomal subunit protein uS2c (rps2).